We begin with the raw amino-acid sequence, 346 residues long: GTP-binding RHO-like protein (346 aa).

A compositionally biased stretch (basic residues) spans 1–10 (MTPNGSRRHS). A disordered region spans residues 1-25 (MTPNGSRRHSAYMGSPRSQHSSTME). Over residues 16 to 25 (PRSQHSSTME) the composition is skewed to polar residues. 82 to 89 (GDGGCGKT) provides a ligand contact to GTP. The Effector region signature appears at 104–112 (YVPTVFENY). Residues 130–134 (DTAGQ) and 188–191 (TKSD) each bind GTP. Residues 259–294 (LGGSNGGSGNHSRHHSRNYSNVSNNRRGHLKNTSYD) form a disordered region. Residue Cys-343 is modified to Cysteine methyl ester. Residue Cys-343 is the site of S-geranylgeranyl cysteine attachment. A propeptide spans 344–346 (VIL) (removed in mature form).

This sequence belongs to the small GTPase superfamily. Rho family.

The protein resides in the cell membrane. This Candida albicans (strain WO-1) (Yeast) protein is GTP-binding RHO-like protein (CRL1).